Here is a 461-residue protein sequence, read N- to C-terminus: Elongation factor 1-alpha (461 aa).

At Gly-2 the chain carries N,N,N-trimethylglycine. Lys-3 carries the N6,N6-dimethyllysine; alternate modification. At Lys-3 the chain carries N6-methyllysine; alternate. The 236-residue stretch at Lys-6 to Thr-241 folds into the tr-type G domain. The tract at residues Gly-15–Ser-22 is G1. Gly-15–Ser-22 lines the GTP pocket. Lys-31 carries the N6-methyllysine modification. The interval Gly-71–Asp-75 is G2. The residue at position 80 (Lys-80) is an N6,N6,N6-trimethyllysine. Positions Asp-92–Gly-95 are G3. GTP contacts are provided by residues Asp-92–His-96 and Asn-154–Asp-157. A G4 region spans residues Asn-154 to Asp-157. The tract at residues Ser-193–Phe-195 is G5. Lys-317 is subject to N6,N6-dimethyllysine; alternate. Lys-317 is subject to N6-methyllysine; alternate. Position 391 is an N6-methyllysine (Lys-391).

This sequence belongs to the TRAFAC class translation factor GTPase superfamily. Classic translation factor GTPase family. EF-Tu/EF-1A subfamily.

The protein localises to the cytoplasm. Functionally, this protein promotes the GTP-dependent binding of aminoacyl-tRNA to the A-site of ribosomes during protein biosynthesis. This chain is Elongation factor 1-alpha (TEF), found in Pseudoechria curvicolla (Podospora curvicolla).